The chain runs to 93 residues: Small ribosomal subunit protein uS19 (93 aa).

It belongs to the universal ribosomal protein uS19 family.

Protein S19 forms a complex with S13 that binds strongly to the 16S ribosomal RNA. This Thermus thermophilus (strain ATCC BAA-163 / DSM 7039 / HB27) protein is Small ribosomal subunit protein uS19 (rpsS).